We begin with the raw amino-acid sequence, 105 residues long: Integration host factor subunit alpha (105 aa).

The protein belongs to the bacterial histone-like protein family. Heterodimer of an alpha and a beta chain.

Its function is as follows. This protein is one of the two subunits of integration host factor, a specific DNA-binding protein that functions in genetic recombination as well as in transcriptional and translational control. In Xanthobacter autotrophicus (strain ATCC BAA-1158 / Py2), this protein is Integration host factor subunit alpha.